The following is a 941-amino-acid chain: Cilia- and flagella-associated protein 69 (941 aa).

It is found in the cell projection. The protein resides in the cilium. Its subcellular location is the flagellum. Its function is as follows. Cilium- and flagellum-associated protein. In the olfactory epithelium, regulates the speed of activation and termination of the odor response and thus contributes to the robustness of olfactory transduction pathways. Required for sperm flagellum assembly and stability. The protein is Cilia- and flagella-associated protein 69 of Callithrix jacchus (White-tufted-ear marmoset).